Reading from the N-terminus, the 997-residue chain is P3N-PIPO polyprotein (997 aa).

One can recognise a Peptidase S30 domain in the interval 173–313; the sequence is IVCVDDVNNL…VLFYSDVEHY (141 aa). Residues glutamate 235 and serine 267 each act as for P1 proteinase activity in the active site. Positions 365–368 match the Involved in interaction with stylet and aphid transmission motif; sequence KLSC. An Involved in virions binding and aphid transmission motif is present at residues 621–623; sequence PTK. Positions 647–769 constitute a Peptidase C6 domain; the sequence is MYIAKEGYCY…QSEMKHYRVG (123 aa). Residues cysteine 655 and histidine 728 each act as for helper component proteinase activity in the active site.

It belongs to the potyviridae P3N-PIPO polyprotein family. In terms of assembly, interacts (via PIPO domain) with host PCaP1 protein; this interaction may help to anchor the movement complex to the plasma membrane from which the complex could move to the plasmodesmata. Potyviral RNA is expressed as two polyproteins which undergo post-translational proteolytic processing. Genome polyprotein is processed by NIa-pro, P1 and HC-pro proteinases resulting in the production of at least ten individual proteins. P3N-PIPO is cleaved by P1 and HC-pro proteinases resulting in the production of three individual proteins. The P1 proteinase and the HC-pro cleave only their respective C-termini autocatalytically.

The protein localises to the host cell junction. It localises to the host plasmodesma. The catalysed reaction is Hydrolyzes a Gly-|-Gly bond at its own C-terminus, commonly in the sequence -Tyr-Xaa-Val-Gly-|-Gly, in the processing of the potyviral polyprotein.. In terms of biological role, required for aphid transmission and also has proteolytic activity. Only cleaves a Gly-Gly dipeptide at its own C-terminus. Interacts with virions and aphid stylets. Acts as a suppressor of RNA-mediated gene silencing, also known as post-transcriptional gene silencing (PTGS), a mechanism of plant viral defense that limits the accumulation of viral RNAs. May have RNA-binding activity. Allows efficient cell to cell propagation, by bypassing the host cell wall barrier. Transports viral genome to neighboring plant cells directly through plasmosdesmata, without any budding. This chain is P3N-PIPO polyprotein, found in Citrullus lanatus (Watermelon).